The chain runs to 336 residues: Anthranilate phosphoribosyltransferase (336 aa).

5-phospho-alpha-D-ribose 1-diphosphate-binding positions include G79, 82 to 83, T87, 89 to 92, 107 to 115, and S119; these read GD, NIST, and KHGNRAMSS. G79 contacts anthranilate. S91 contributes to the Mg(2+) binding site. N110 contacts anthranilate. R165 is an anthranilate binding site. Residues D225 and E226 each coordinate Mg(2+).

It belongs to the anthranilate phosphoribosyltransferase family. As to quaternary structure, homodimer. Requires Mg(2+) as cofactor.

It catalyses the reaction N-(5-phospho-beta-D-ribosyl)anthranilate + diphosphate = 5-phospho-alpha-D-ribose 1-diphosphate + anthranilate. It functions in the pathway amino-acid biosynthesis; L-tryptophan biosynthesis; L-tryptophan from chorismate: step 2/5. Catalyzes the transfer of the phosphoribosyl group of 5-phosphorylribose-1-pyrophosphate (PRPP) to anthranilate to yield N-(5'-phosphoribosyl)-anthranilate (PRA). This is Anthranilate phosphoribosyltransferase from Dictyoglomus thermophilum (strain ATCC 35947 / DSM 3960 / H-6-12).